The primary structure comprises 390 residues: 3-ketoacyl-CoA thiolase (390 aa).

The Acyl-thioester intermediate role is filled by C95. Active-site proton acceptor residues include H346 and C376.

Belongs to the thiolase-like superfamily. Thiolase family. Heterotetramer of two alpha chains (FadB) and two beta chains (FadA).

The protein localises to the cytoplasm. The catalysed reaction is an acyl-CoA + acetyl-CoA = a 3-oxoacyl-CoA + CoA. Its pathway is lipid metabolism; fatty acid beta-oxidation. Functionally, catalyzes the final step of fatty acid oxidation in which acetyl-CoA is released and the CoA ester of a fatty acid two carbons shorter is formed. This is 3-ketoacyl-CoA thiolase from Acinetobacter baumannii (strain AB307-0294).